Consider the following 306-residue polypeptide: MPFLELTLRCTEATQPRYENALEDVGALAVTLLDAEADTSNEQAILEPGVGETPLWDTLVLSALFPADSNALLLLAALEAFDPELDWSGGSFRAVEDEDWERAWLDQFQPMDFGSRTWIVPWNHELPEAAQAADAAVVRLDPGLAFGSGTHPTTALCLRWLDQLAVDGLLQGQRVLDFGCGSGILALAALKLGAAEAIGVDNDPQALVATADNAERNGEQARMHVYLPQDEPVATYPVVVANILASALDALAELLAARVAAGGRIALSGILHGQEGELLQRYAPWFDDLQATQDGDWMRITGVRRA.

The S-adenosyl-L-methionine site is built by Thr154, Gly179, Asp201, and Asn242.

It belongs to the methyltransferase superfamily. PrmA family.

It is found in the cytoplasm. It carries out the reaction L-lysyl-[protein] + 3 S-adenosyl-L-methionine = N(6),N(6),N(6)-trimethyl-L-lysyl-[protein] + 3 S-adenosyl-L-homocysteine + 3 H(+). Methylates ribosomal protein L11. This chain is Ribosomal protein L11 methyltransferase, found in Stenotrophomonas maltophilia (strain R551-3).